The chain runs to 81 residues: LYR motif-containing protein 4 (81 aa).

It belongs to the complex I LYR family.

It is found in the mitochondrion. The protein resides in the nucleus. Its pathway is cofactor biosynthesis; iron-sulfur cluster biosynthesis. Its function is as follows. Required for nuclear and mitochondrial iron-sulfur protein biosynthesis. The protein is LYR motif-containing protein 4 (lyrm4) of Dictyostelium discoideum (Social amoeba).